Reading from the N-terminus, the 310-residue chain is D-alanine--D-alanine ligase (310 aa).

An ATP-grasp domain is found at 104-305 (KRLFHSEGLP…MPQLAERILQ (202 aa)). Position 135-190 (135-190 (LGDFHGAAFVKPLDSGSSVGISRAVGKDELIRGVAKALSVSHRCMVERAIEGRELT)) interacts with ATP. Residues Asp259, Glu272, and Asn274 each coordinate Mg(2+).

It belongs to the D-alanine--D-alanine ligase family. It depends on Mg(2+) as a cofactor. Mn(2+) is required as a cofactor.

The protein resides in the cytoplasm. It catalyses the reaction 2 D-alanine + ATP = D-alanyl-D-alanine + ADP + phosphate + H(+). Its pathway is cell wall biogenesis; peptidoglycan biosynthesis. In terms of biological role, cell wall formation. The chain is D-alanine--D-alanine ligase from Magnetococcus marinus (strain ATCC BAA-1437 / JCM 17883 / MC-1).